The primary structure comprises 170 residues: Large ribosomal subunit protein uL18c (170 aa).

A chloroplast-targeting transit peptide spans 1–63 (MLASPALAGA…QADRIARHVR (63 aa)).

It belongs to the universal ribosomal protein uL18 family. Part of the 50S ribosomal subunit; contacts the 5S rRNA.

The protein resides in the plastid. Its subcellular location is the chloroplast. In terms of biological role, binds 5S rRNA, forms part of the central protuberance of the 50S subunit. This Oryza sativa subsp. japonica (Rice) protein is Large ribosomal subunit protein uL18c (RPL18).